Reading from the N-terminus, the 360-residue chain is DNA replication and repair protein RecF (360 aa).

Gly-30 to Thr-37 provides a ligand contact to ATP.

The protein belongs to the RecF family.

Its subcellular location is the cytoplasm. In terms of biological role, the RecF protein is involved in DNA metabolism; it is required for DNA replication and normal SOS inducibility. RecF binds preferentially to single-stranded, linear DNA. It also seems to bind ATP. The polypeptide is DNA replication and repair protein RecF (Shewanella sp. (strain MR-4)).